The sequence spans 248 residues: Ubiquinone biosynthesis O-methyltransferase (248 aa).

Arg-41, Gly-72, Asp-93, and Met-136 together coordinate S-adenosyl-L-methionine.

The protein belongs to the methyltransferase superfamily. UbiG/COQ3 family.

It carries out the reaction a 3-demethylubiquinol + S-adenosyl-L-methionine = a ubiquinol + S-adenosyl-L-homocysteine + H(+). It catalyses the reaction a 3-(all-trans-polyprenyl)benzene-1,2-diol + S-adenosyl-L-methionine = a 2-methoxy-6-(all-trans-polyprenyl)phenol + S-adenosyl-L-homocysteine + H(+). It participates in cofactor biosynthesis; ubiquinone biosynthesis. Its function is as follows. O-methyltransferase that catalyzes the 2 O-methylation steps in the ubiquinone biosynthetic pathway. This chain is Ubiquinone biosynthesis O-methyltransferase, found in Bartonella bacilliformis (strain ATCC 35685 / KC583 / Herrer 020/F12,63).